Consider the following 378-residue polypeptide: GDP-mannose-dependent alpha-mannosyltransferase (378 aa).

This sequence belongs to the glycosyltransferase group 1 family. Glycosyltransferase 4 subfamily.

Its pathway is phospholipid metabolism; phosphatidylinositol metabolism. In terms of biological role, catalyzes the addition of a mannose residue from GDP-D-mannose to GlcAGroAc2 to generate 1,2-di-O-C16/C18:1-(alpha-D-mannopyranosyl)-(1-4)-(alpha-D-glucopyranosyluronic acid)-(1-3)-glycerol(ManGlcAGroAc2). The sequence is that of GDP-mannose-dependent alpha-mannosyltransferase (mgtA) from Mycobacterium tuberculosis (strain CDC 1551 / Oshkosh).